The primary structure comprises 374 residues: DNA replication and repair protein RecF (374 aa).

34–41 serves as a coordination point for ATP; it reads GDNGAGKT.

It belongs to the RecF family.

The protein localises to the cytoplasm. Functionally, the RecF protein is involved in DNA metabolism; it is required for DNA replication and normal SOS inducibility. RecF binds preferentially to single-stranded, linear DNA. It also seems to bind ATP. The sequence is that of DNA replication and repair protein RecF from Rhizobium johnstonii (strain DSM 114642 / LMG 32736 / 3841) (Rhizobium leguminosarum bv. viciae).